The following is a 130-amino-acid chain: Glycine cleavage system H protein (130 aa).

One can recognise a Lipoyl-binding domain in the interval 22–103; the sequence is KAYIGISDCA…PYGSWIAAIE (82 aa). N6-lipoyllysine is present on Lys63.

This sequence belongs to the GcvH family. In terms of assembly, the glycine cleavage system is composed of four proteins: P, T, L and H. (R)-lipoate serves as cofactor.

Its function is as follows. The glycine cleavage system catalyzes the degradation of glycine. The H protein shuttles the methylamine group of glycine from the P protein to the T protein. The sequence is that of Glycine cleavage system H protein from Clostridium botulinum (strain Okra / Type B1).